The sequence spans 402 residues: Protein FAM53A (402 aa).

Residue S119 is modified to Phosphoserine. Residues 170-215 (LVPGLPRRPVSPAGPTSPLTPRPASASSGFVDGSEGSTSSGPPWLS) form a disordered region. A Nuclear localization signal motif is present at residues 273–281 (RRVRRKRRR). 2 positions are modified to phosphoserine: S306 and S309. Residues 323-333 (TLVSSPCNSQG) are compositionally biased toward polar residues. A disordered region spans residues 323–402 (TLVSSPCNSQ…DLDLEQIENN (80 aa)). Residues 336 to 345 (GIITPSSSPR) are compositionally biased toward low complexity.

The protein belongs to the FAM53 family.

Its subcellular location is the nucleus. In terms of biological role, may play an important role in neural development; the dorsomedial roof of the third ventricle. The chain is Protein FAM53A from Mus musculus (Mouse).